Reading from the N-terminus, the 740-residue chain is Ion-translocating oxidoreductase complex subunit C (740 aa).

2 consecutive 4Fe-4S ferredoxin-type domains span residues 369-397 (GEPQ…QQLY) and 407-436 (KATT…VQYF). Residues C377, C380, C383, C387, C416, C419, C422, and C426 each coordinate [4Fe-4S] cluster. The interval 598–716 (AKARKLEQQQ…EPEEQVDPRK (119 aa)) is disordered.

Belongs to the 4Fe4S bacterial-type ferredoxin family. RnfC subfamily. In terms of assembly, the complex is composed of six subunits: RsxA, RsxB, RsxC, RsxD, RsxE and RsxG. [4Fe-4S] cluster serves as cofactor.

The protein resides in the cell inner membrane. Its function is as follows. Part of a membrane-bound complex that couples electron transfer with translocation of ions across the membrane. Required to maintain the reduced state of SoxR. This Shigella flexneri serotype 5b (strain 8401) protein is Ion-translocating oxidoreductase complex subunit C.